Consider the following 198-residue polypeptide: dITP/XTP pyrophosphatase (198 aa).

Substrate is bound at residue 9 to 14 (SNNAKK). The Mg(2+) site is built by D41 and D70. The Proton acceptor role is filled by D70. Substrate-binding positions include S71, 153–156 (FGYD), K176, and 181–182 (HR).

This sequence belongs to the HAM1 NTPase family. In terms of assembly, homodimer. Requires Mg(2+) as cofactor.

It carries out the reaction XTP + H2O = XMP + diphosphate + H(+). The enzyme catalyses dITP + H2O = dIMP + diphosphate + H(+). The catalysed reaction is ITP + H2O = IMP + diphosphate + H(+). Pyrophosphatase that catalyzes the hydrolysis of nucleoside triphosphates to their monophosphate derivatives, with a high preference for the non-canonical purine nucleotides XTP (xanthosine triphosphate), dITP (deoxyinosine triphosphate) and ITP. Seems to function as a house-cleaning enzyme that removes non-canonical purine nucleotides from the nucleotide pool, thus preventing their incorporation into DNA/RNA and avoiding chromosomal lesions. The polypeptide is dITP/XTP pyrophosphatase (Aromatoleum aromaticum (strain DSM 19018 / LMG 30748 / EbN1) (Azoarcus sp. (strain EbN1))).